Consider the following 176-residue polypeptide: Small ribosomal subunit protein uS5c (176 aa).

In terms of domain architecture, S5 DRBM spans 26–89 (LVERLIKISR…TDGRKNLIEL (64 aa)).

Belongs to the universal ribosomal protein uS5 family. As to quaternary structure, part of the 30S ribosomal subunit. Contacts protein S4.

It localises to the plastid. Its subcellular location is the chloroplast. With S4 and S12 plays an important role in translational accuracy. The polypeptide is Small ribosomal subunit protein uS5c (rps5) (Phaeodactylum tricornutum (strain CCAP 1055/1)).